The sequence spans 175 residues: Large ribosomal subunit protein uL30 (175 aa).

This sequence belongs to the universal ribosomal protein uL30 family. As to quaternary structure, part of the 50S ribosomal subunit.

The sequence is that of Large ribosomal subunit protein uL30 from Pyrobaculum neutrophilum (strain DSM 2338 / JCM 9278 / NBRC 100436 / V24Sta) (Thermoproteus neutrophilus).